The following is a 902-amino-acid chain: Protein translocase subunit SecA (902 aa).

ATP contacts are provided by residues glutamine 87, glycine 105–threonine 109, and aspartate 512. Disordered stretches follow at residues arginine 565–serine 584 and valine 840–lysine 902. 2 stretches are compositionally biased toward basic and acidic residues: residues valine 840–alanine 859 and glutamine 873–arginine 882. The Zn(2+) site is built by cysteine 886, cysteine 888, cysteine 897, and histidine 898. The span at lysine 892–lysine 902 shows a compositional bias: basic residues.

It belongs to the SecA family. Monomer and homodimer. Part of the essential Sec protein translocation apparatus which comprises SecA, SecYEG and auxiliary proteins SecDF-YajC and YidC. Zn(2+) is required as a cofactor.

It is found in the cell inner membrane. It localises to the cytoplasm. The catalysed reaction is ATP + H2O + cellular proteinSide 1 = ADP + phosphate + cellular proteinSide 2.. Functionally, part of the Sec protein translocase complex. Interacts with the SecYEG preprotein conducting channel. Has a central role in coupling the hydrolysis of ATP to the transfer of proteins into and across the cell membrane, serving both as a receptor for the preprotein-SecB complex and as an ATP-driven molecular motor driving the stepwise translocation of polypeptide chains across the membrane. The polypeptide is Protein translocase subunit SecA (Alteromonas mediterranea (strain DSM 17117 / CIP 110805 / LMG 28347 / Deep ecotype)).